Here is a 531-residue protein sequence, read N- to C-terminus: Glucose-6-phosphate exchanger SLC37A1 (531 aa).

The chain crosses the membrane as a helical span at residues 18-38 (QWYRAFIFMLTFLLYASFHLS). The tract at residues 53–72 (CTAGDGPESPFSDPSSSTRH) is disordered. 11 helical membrane-spanning segments follow: residues 100–120 (GALDYAFLCAYAIGMYLSGII), 129–149 (YLTFGMLASGAFTALFGLGYF), 157–177 (FYVVTQIINGLVQTTGWPSVV), 192–214 (IMGIWNSHTSVGNILGSLIAGYW), 222–242 (SFIVPGAIVAAMGIVCFLFLI), 332–352 (LCLLFAKLVSYTFLFWLPLYI), 364–384 (GELSTLFDVGGIFGGILAGVI), 392–412 (ASTCGLMLLLAAPTLYVFSSV), 419–439 (ATIAMLLLSGALVSGPYALIT), 464–484 (AIIDGTGSVGAALGPLLAGLI), and 488–508 (GWSNVFYMLMFADACALLFLV).

This sequence belongs to the major facilitator superfamily. Organophosphate:Pi antiporter (OPA) (TC 2.A.1.4) family.

Its subcellular location is the endoplasmic reticulum membrane. The catalysed reaction is D-glucose 6-phosphate(in) + phosphate(out) = D-glucose 6-phosphate(out) + phosphate(in). With respect to regulation, inhibited by vanadate but not by chlorogenic acid. Its function is as follows. Inorganic phosphate and glucose-6-phosphate antiporter. May transport cytoplasmic glucose-6-phosphate into the lumen of the endoplasmic reticulum and translocate inorganic phosphate into the opposite direction. Independent of a lumenal glucose-6-phosphatase. May not play a role in homeostatic regulation of blood glucose levels. This is Glucose-6-phosphate exchanger SLC37A1 from Mus musculus (Mouse).